A 372-amino-acid polypeptide reads, in one-letter code: Protein RecA (372 aa).

77-84 (GPESSGKT) lines the ATP pocket.

The protein belongs to the RecA family.

It localises to the cytoplasm. Its function is as follows. Can catalyze the hydrolysis of ATP in the presence of single-stranded DNA, the ATP-dependent uptake of single-stranded DNA by duplex DNA, and the ATP-dependent hybridization of homologous single-stranded DNAs. It interacts with LexA causing its activation and leading to its autocatalytic cleavage. The chain is Protein RecA from Corynebacterium diphtheriae (strain ATCC 700971 / NCTC 13129 / Biotype gravis).